We begin with the raw amino-acid sequence, 703 residues long: Polyribonucleotide nucleotidyltransferase (703 aa).

Mg(2+)-binding residues include aspartate 484 and aspartate 490. Positions 551-610 (PQMIRMQIDPDKIREVIGPGGKTIHKIVDETGCKIDIEDDGSLFIMATDEEAAKKARFFV) constitute a KH domain. Positions 620-694 (GKTYMGTVKR…RQGRVNLSRK (75 aa)) constitute an S1 motif domain.

Belongs to the polyribonucleotide nucleotidyltransferase family. The cofactor is Mg(2+).

It is found in the cytoplasm. It catalyses the reaction RNA(n+1) + phosphate = RNA(n) + a ribonucleoside 5'-diphosphate. Its function is as follows. Involved in mRNA degradation. Catalyzes the phosphorolysis of single-stranded polyribonucleotides processively in the 3'- to 5'-direction. The sequence is that of Polyribonucleotide nucleotidyltransferase from Syntrophomonas wolfei subsp. wolfei (strain DSM 2245B / Goettingen).